The sequence spans 580 residues: FAD-dependent monooxygenase DEP4 (580 aa).

47-50 serves as a coordination point for FAD; sequence VWSK. Residue 58–60 coordinates NADP(+); sequence FAQ. Valine 112 is a binding site for FAD. NADP(+)-binding positions include 186 to 205, 222 to 223, and 354 to 355; these read VGRS…AGKK, AP, and DI. Methionine 473 provides a ligand contact to FAD.

This sequence belongs to the FAD-binding monooxygenase family. The cofactor is FAD.

It participates in polyketide biosynthesis. Its function is as follows. Part of the gene cluster that mediates the biosynthesis of depudecin, a highly oxidized eleven-carbon linear polyketide that acts as a histone deacetylase (HDAC) inhibitor and makes a small contribution to pathogenesis. The reducing polyketide synthase DEP5 is the central enzyme in depudecin biosynthesis by yielding the backbone polyketide chain. The monooxygenases DEP2 and DEP4, as well as the uncharacterized protein DEP1, then act as tailoring enzymes to modify the intermediate polyketide chain into depudecin. The chain is FAD-dependent monooxygenase DEP4 from Fusarium langsethiae.